The following is a 484-amino-acid chain: MDDLESTCASLRAQISATETQLAGLKRALHEAEQAAAHAKAQSAAATTAGDNHDKPRRWPLLDEEYRRYGRQMIVPQLGLPGQLKLRSARVLIVGAGGLGCPAALYLAGAGVGTLGLIDGDMVDVSNLHRQVLHRSANVGKLKVDSAIEYLRELNPHPTYIPHRAHLTPQEAPEIFQNYDVILDCTDNPATRYLISDTAVLLGKPLVSASALRTEGQLMVLNNPPRPAGDKTGGPCYRCVFPKPPPANSILSCADGGILGPVVGTMGVLQALEAIKVITSTEDEVRPPSLHIFSAYSSPPFRSIKLRSRRANCAVCSAERQVTLDTLRSGLTDYVFFCGSVSPEAVLTAEERIAPREYRAMYPAPTEGAPEKTPTLIDVREKVQYDICNLAESINIPISTIQASAAGSGDETGSSLPAWLPPEIASTDSTDPIYVVCRMGNDSQLAVRRLKELGLDRGGARVVADIQGGFRAWREQVDPEWPEY.

A compositionally biased stretch (low complexity) spans 39-49 (AKAQSAAATTA). The interval 39 to 58 (AKAQSAAATTAGDNHDKPRR) is disordered. ATP-binding positions include Gly-98, Asp-119, 126 to 130 (SNLHR), Lys-143, and 187 to 188 (DN). Cys-236 and Cys-239 together coordinate Zn(2+). Catalysis depends on Cys-253, which acts as the Glycyl thioester intermediate; for adenylyltransferase activity. 2 residues coordinate Zn(2+): Cys-313 and Cys-316. The Rhodanese domain maps to 370 to 482 (PEKTPTLIDV…WREQVDPEWP (113 aa)). The active-site Cysteine persulfide intermediate; for sulfurtransferase activity is the Cys-437.

In the N-terminal section; belongs to the HesA/MoeB/ThiF family. UBA4 subfamily. Requires Zn(2+) as cofactor.

Its subcellular location is the cytoplasm. It localises to the cytosol. It catalyses the reaction [molybdopterin-synthase sulfur-carrier protein]-C-terminal Gly-Gly + ATP + H(+) = [molybdopterin-synthase sulfur-carrier protein]-C-terminal Gly-Gly-AMP + diphosphate. It carries out the reaction [molybdopterin-synthase sulfur-carrier protein]-C-terminal Gly-Gly-AMP + S-sulfanyl-L-cysteinyl-[cysteine desulfurase] + AH2 = [molybdopterin-synthase sulfur-carrier protein]-C-terminal-Gly-aminoethanethioate + L-cysteinyl-[cysteine desulfurase] + A + AMP + 2 H(+). It functions in the pathway tRNA modification; 5-methoxycarbonylmethyl-2-thiouridine-tRNA biosynthesis. It participates in cofactor biosynthesis; molybdopterin biosynthesis. Functionally, plays a central role in 2-thiolation of mcm(5)S(2)U at tRNA wobble positions of cytosolic tRNA(Lys), tRNA(Glu) and tRNA(Gln). Also essential during biosynthesis of the molybdenum cofactor. Acts by mediating the C-terminal thiocarboxylation of sulfur carriers urm1 and mocs2a. Its N-terminus first activates urm1 and mocs2a as acyl-adenylates (-COAMP), then the persulfide sulfur on the catalytic cysteine is transferred to urm1 and mocs2a to form thiocarboxylation (-COSH) of their C-terminus. The reaction probably involves hydrogen sulfide that is generated from the persulfide intermediate and that acts as a nucleophile towards urm1 and mocs2a. Subsequently, a transient disulfide bond is formed. Does not use thiosulfate as sulfur donor; nfs1 probably acting as a sulfur donor for thiocarboxylation reactions. This chain is Adenylyltransferase and sulfurtransferase uba4, found in Aspergillus terreus (strain NIH 2624 / FGSC A1156).